The sequence spans 451 residues: Tubulin alpha chain (451 aa).

Residue Q11 coordinates GTP. Residue K40 is modified to N6-acetyllysine. Positions 71, 144, 145, 179, 206, and 228 each coordinate GTP. A Mg(2+)-binding site is contributed by E71. E254 is a catalytic residue.

It belongs to the tubulin family. As to quaternary structure, dimer of alpha and beta chains. A typical microtubule is a hollow water-filled tube with an outer diameter of 25 nm and an inner diameter of 15 nM. Alpha-beta heterodimers associate head-to-tail to form protofilaments running lengthwise along the microtubule wall with the beta-tubulin subunit facing the microtubule plus end conferring a structural polarity. Microtubules usually have 13 protofilaments but different protofilament numbers can be found in some organisms and specialized cells. Requires Mg(2+) as cofactor. Undergoes a tyrosination/detyrosination cycle, the cyclic removal and re-addition of a C-terminal tyrosine residue by the enzymes tubulin tyrosine carboxypeptidase (TTCP) and tubulin tyrosine ligase (TTL), respectively. Post-translationally, acetylation of alpha chains at Lys-40 stabilizes microtubules and affects affinity and processivity of microtubule motors. This modification has a role in multiple cellular functions, ranging from cell motility, cell cycle progression or cell differentiation to intracellular trafficking and signaling.

It is found in the cytoplasm. Its subcellular location is the cytoskeleton. The enzyme catalyses GTP + H2O = GDP + phosphate + H(+). Its function is as follows. Tubulin is the major constituent of microtubules, a cylinder consisting of laterally associated linear protofilaments composed of alpha- and beta-tubulin heterodimers. Microtubules grow by the addition of GTP-tubulin dimers to the microtubule end, where a stabilizing cap forms. Below the cap, tubulin dimers are in GDP-bound state, owing to GTPase activity of alpha-tubulin. In Triticum aestivum (Wheat), this protein is Tubulin alpha chain (TUBA).